The primary structure comprises 187 residues: Frequenin-1 (187 aa).

A lipid anchor (N-myristoyl glycine) is attached at Gly2. EF-hand domains are found at residues 24–59 (EKEI…FPQG), 60–95 (DPSK…TSKG), 96–131 (NLDE…IYQM), and 143–178 (TPQK…DPRI). Residues Asp73, Asn75, Asp77, Ser79, Glu84, Asp109, Asp111, Asp113, Tyr115, Glu120, Asp156, Asn158, Asp160, Lys162, and Glu167 each contribute to the Ca(2+) site.

It belongs to the recoverin family. As to quaternary structure, in contrast to Frq2, does not interact with ric8a. In terms of tissue distribution, enriched in synapses, such as the motor nerve endings at neuromuscular junctions. In the embryo, highly expressed in the ventral ganglia.

It localises to the cytoplasm. Its function is as follows. Ca(2+)-dependent modulation of synaptic efficacy. Also plays a role in axon terminal morphology. The polypeptide is Frequenin-1 (Frq1) (Drosophila melanogaster (Fruit fly)).